Reading from the N-terminus, the 360-residue chain is Phenylalanine--tRNA ligase alpha subunit (360 aa).

Glutamate 260 provides a ligand contact to Mg(2+).

Belongs to the class-II aminoacyl-tRNA synthetase family. Phe-tRNA synthetase alpha subunit type 1 subfamily. In terms of assembly, tetramer of two alpha and two beta subunits. Mg(2+) serves as cofactor.

The protein localises to the cytoplasm. It carries out the reaction tRNA(Phe) + L-phenylalanine + ATP = L-phenylalanyl-tRNA(Phe) + AMP + diphosphate + H(+). The sequence is that of Phenylalanine--tRNA ligase alpha subunit from Rhizobium johnstonii (strain DSM 114642 / LMG 32736 / 3841) (Rhizobium leguminosarum bv. viciae).